A 210-amino-acid polypeptide reads, in one-letter code: Orotate phosphoribosyltransferase (210 aa).

5-phospho-alpha-D-ribose 1-diphosphate is bound by residues R94, K98, H100, and 120–128 (EDLISTGGS). S124 serves as a coordination point for orotate.

The protein belongs to the purine/pyrimidine phosphoribosyltransferase family. PyrE subfamily. In terms of assembly, homodimer. Mg(2+) serves as cofactor.

It carries out the reaction orotidine 5'-phosphate + diphosphate = orotate + 5-phospho-alpha-D-ribose 1-diphosphate. It functions in the pathway pyrimidine metabolism; UMP biosynthesis via de novo pathway; UMP from orotate: step 1/2. Catalyzes the transfer of a ribosyl phosphate group from 5-phosphoribose 1-diphosphate to orotate, leading to the formation of orotidine monophosphate (OMP). This chain is Orotate phosphoribosyltransferase, found in Halalkalibacterium halodurans (strain ATCC BAA-125 / DSM 18197 / FERM 7344 / JCM 9153 / C-125) (Bacillus halodurans).